A 364-amino-acid polypeptide reads, in one-letter code: 4-hydroxy-3-methylbut-2-en-1-yl diphosphate synthase (flavodoxin) (364 aa).

Cys-268, Cys-271, Cys-303, and Glu-310 together coordinate [4Fe-4S] cluster.

This sequence belongs to the IspG family. Requires [4Fe-4S] cluster as cofactor.

It carries out the reaction (2E)-4-hydroxy-3-methylbut-2-enyl diphosphate + oxidized [flavodoxin] + H2O + 2 H(+) = 2-C-methyl-D-erythritol 2,4-cyclic diphosphate + reduced [flavodoxin]. It participates in isoprenoid biosynthesis; isopentenyl diphosphate biosynthesis via DXP pathway; isopentenyl diphosphate from 1-deoxy-D-xylulose 5-phosphate: step 5/6. In terms of biological role, converts 2C-methyl-D-erythritol 2,4-cyclodiphosphate (ME-2,4cPP) into 1-hydroxy-2-methyl-2-(E)-butenyl 4-diphosphate. In Desulfotalea psychrophila (strain LSv54 / DSM 12343), this protein is 4-hydroxy-3-methylbut-2-en-1-yl diphosphate synthase (flavodoxin).